Here is a 227-residue protein sequence, read N- to C-terminus: ATP synthase F(0) complex subunit a (227 aa).

Transmembrane regions (helical) follow at residues 12–32 (PCLLGIPLILPSLLLPALLLP), 69–89 (WALLLTSLILMLLSINLLGLL), 98–118 (QLSMNMALALPLWLATLLTGL), 139–159 (IPALIMIETTSLLIRPLALGV), 170–190 (LLIQLISTATIALLPMMPSIS), and 196–216 (ILFLLTILEVAVAMIQAYVFV).

This sequence belongs to the ATPase A chain family. In terms of assembly, component of the ATP synthase complex composed at least of ATP5F1A/subunit alpha, ATP5F1B/subunit beta, ATP5MC1/subunit c (homooctomer), MT-ATP6/subunit a, MT-ATP8/subunit 8, ATP5ME/subunit e, ATP5MF/subunit f, ATP5MG/subunit g, ATP5MK/subunit k, ATP5MJ/subunit j, ATP5F1C/subunit gamma, ATP5F1D/subunit delta, ATP5F1E/subunit epsilon, ATP5PF/subunit F6, ATP5PB/subunit b, ATP5PD/subunit d, ATP5PO/subunit OSCP. ATP synthase complex consists of a soluble F(1) head domain (subunits alpha(3) and beta(3)) - the catalytic core - and a membrane F(0) domain - the membrane proton channel (subunits c, a, 8, e, f, g, k and j). These two domains are linked by a central stalk (subunits gamma, delta, and epsilon) rotating inside the F1 region and a stationary peripheral stalk (subunits F6, b, d, and OSCP). Interacts with DNAJC30; interaction is direct.

It localises to the mitochondrion inner membrane. It carries out the reaction H(+)(in) = H(+)(out). Functionally, subunit a, of the mitochondrial membrane ATP synthase complex (F(1)F(0) ATP synthase or Complex V) that produces ATP from ADP in the presence of a proton gradient across the membrane which is generated by electron transport complexes of the respiratory chain. ATP synthase complex consist of a soluble F(1) head domain - the catalytic core - and a membrane F(1) domain - the membrane proton channel. These two domains are linked by a central stalk rotating inside the F(1) region and a stationary peripheral stalk. During catalysis, ATP synthesis in the catalytic domain of F(1) is coupled via a rotary mechanism of the central stalk subunits to proton translocation. With the subunit c (ATP5MC1), forms the proton-conducting channel in the F(0) domain, that contains two crucial half-channels (inlet and outlet) that facilitate proton movement from the mitochondrial intermembrane space (IMS) into the matrix. Protons are taken up via the inlet half-channel and released through the outlet half-channel, following a Grotthuss mechanism. This is ATP synthase F(0) complex subunit a from Gallus gallus (Chicken).